The sequence spans 356 residues: Sensor protein BasS (356 aa).

Over 1–13 (MRFQRRAMTLRQR) the chain is Cytoplasmic. The helical transmembrane segment at 14–34 (LMLTIGLILLVFQLISTFWLW) threads the bilayer. The Periplasmic portion of the chain corresponds to 35 to 64 (HESTEQIQLFEQALRDNRNNDRHIMHEIRE). The helical transmembrane segment at 65–88 (AVASLIVPGVFMVSLTLLICYQAV) threads the bilayer. In terms of domain architecture, HAMP spans 89 to 141 (RRITRPLAELQKELEARTADNLAPIAIHSSTLEIESVVSAINQLVTRLTTTLD). Residues 89 to 356 (RRITRPLAEL…TRAWVLLKKA (268 aa)) are Cytoplasmic-facing. The region spanning 149 to 356 (DVAHELRTPL…TRAWVLLKKA (208 aa)) is the Histidine kinase domain. His-152 is subject to Phosphohistidine; by autocatalysis.

Post-translationally, autophosphorylated.

The protein resides in the cell inner membrane. It carries out the reaction ATP + protein L-histidine = ADP + protein N-phospho-L-histidine.. Functionally, member of the two-component regulatory system BasS/BasR. Autophosphorylates and activates BasR by phosphorylation. Plays a role in the adaptation of the organism to the host environment, in particular to neutrophils, and therefore it plays a role in virulence as well. The sequence is that of Sensor protein BasS (basS) from Salmonella typhimurium (strain LT2 / SGSC1412 / ATCC 700720).